The primary structure comprises 360 residues: uncharacterized protein (360 aa).

The ABC transporter domain occupies 4-235 (LSLQHIQKIY…PANMFVAGFI (232 aa)). 37–44 (GPSGCGKS) contacts ATP.

It belongs to the ABC transporter superfamily.

This is an uncharacterized protein from Escherichia coli O6:H1 (strain CFT073 / ATCC 700928 / UPEC).